Reading from the N-terminus, the 368-residue chain is Phospho-N-acetylmuramoyl-pentapeptide-transferase (368 aa).

9 helical membrane-spanning segments follow: residues 23–43, 72–92, 94–114, 139–159, 170–190, 201–221, 238–258, 265–286, and 345–365; these read YITF…LVFG, IPTM…LLWA, IAEP…AVGF, VALG…SVLL, ITVD…TAVS, GLAA…AYLT, AGEV…FLWF, VFMG…ALLI, and KIVI…LLTL.

Belongs to the glycosyltransferase 4 family. MraY subfamily. The cofactor is Mg(2+).

The protein localises to the cell inner membrane. It carries out the reaction UDP-N-acetyl-alpha-D-muramoyl-L-alanyl-gamma-D-glutamyl-meso-2,6-diaminopimeloyl-D-alanyl-D-alanine + di-trans,octa-cis-undecaprenyl phosphate = di-trans,octa-cis-undecaprenyl diphospho-N-acetyl-alpha-D-muramoyl-L-alanyl-D-glutamyl-meso-2,6-diaminopimeloyl-D-alanyl-D-alanine + UMP. Its pathway is cell wall biogenesis; peptidoglycan biosynthesis. Functionally, catalyzes the initial step of the lipid cycle reactions in the biosynthesis of the cell wall peptidoglycan: transfers peptidoglycan precursor phospho-MurNAc-pentapeptide from UDP-MurNAc-pentapeptide onto the lipid carrier undecaprenyl phosphate, yielding undecaprenyl-pyrophosphoryl-MurNAc-pentapeptide, known as lipid I. The chain is Phospho-N-acetylmuramoyl-pentapeptide-transferase from Chloroherpeton thalassium (strain ATCC 35110 / GB-78).